The sequence spans 157 residues: 2-C-methyl-D-erythritol 2,4-cyclodiphosphate synthase (157 aa).

A divalent metal cation is bound by residues aspartate 8 and histidine 10. 4-CDP-2-C-methyl-D-erythritol 2-phosphate contacts are provided by residues 8 to 10 (DVH) and 34 to 35 (HS). Histidine 42 contacts a divalent metal cation. 4-CDP-2-C-methyl-D-erythritol 2-phosphate-binding positions include 56–58 (DIG), 61–65 (FPDTD), 100–106 (AQAPKMA), 132–135 (TTTE), phenylalanine 139, and arginine 142.

Belongs to the IspF family. As to quaternary structure, homotrimer. Requires a divalent metal cation as cofactor.

The catalysed reaction is 4-CDP-2-C-methyl-D-erythritol 2-phosphate = 2-C-methyl-D-erythritol 2,4-cyclic diphosphate + CMP. Its pathway is isoprenoid biosynthesis; isopentenyl diphosphate biosynthesis via DXP pathway; isopentenyl diphosphate from 1-deoxy-D-xylulose 5-phosphate: step 4/6. Its function is as follows. Involved in the biosynthesis of isopentenyl diphosphate (IPP) and dimethylallyl diphosphate (DMAPP), two major building blocks of isoprenoid compounds. Catalyzes the conversion of 4-diphosphocytidyl-2-C-methyl-D-erythritol 2-phosphate (CDP-ME2P) to 2-C-methyl-D-erythritol 2,4-cyclodiphosphate (ME-CPP) with a corresponding release of cytidine 5-monophosphate (CMP). This Pseudomonas fluorescens (strain ATCC BAA-477 / NRRL B-23932 / Pf-5) protein is 2-C-methyl-D-erythritol 2,4-cyclodiphosphate synthase.